The following is a 454-amino-acid chain: uncharacterized protein (454 aa).

A signal peptide spans 1-18 (MRRFTLFVFFLSISIAYA).

This is an uncharacterized protein from Caenorhabditis elegans.